A 1036-amino-acid chain; its full sequence is Mitogen-activated protein kinase kinase kinase 21 (1036 aa).

The disordered stretch occupies residues 1–36; that stretch reads MALRGAAGATDTPVSSAGGAPGGSASSSSTSSGGSA. A compositionally biased stretch (low complexity) spans 15 to 36; the sequence is SSAGGAPGGSASSSSTSSGGSA. The region spanning 38 to 102 is the SH3 domain; it reads AGAGLWAALY…PANYVAPCRP (65 aa). Positions 124–401 constitute a Protein kinase domain; the sequence is LELKELIGAG…ALILEQLTAI (278 aa). Residues 130 to 138 and Lys-151 each bind ATP; that span reads IGAGGFGQV. Residue Asp-263 is the Proton acceptor of the active site. A Phosphothreonine; by autocatalysis modification is found at Thr-299. Ser-303 carries the phosphoserine; by autocatalysis and MAP4K1 modification. Leucine-zipper stretches follow at residues 425–446 and 460–481; these read IQQM…EEEL and LKRR…ELNI. The segment at 517-551 is disordered; it reads SDFQHKITVQASPNLDKRRSLNSSSSSPPSSPTMM. A phosphoserine mark is found at Ser-528, Ser-543, and Ser-547. A Phosphothreonine modification is found at Thr-592. Ser-614 carries the phosphoserine modification. The span at 748 to 763 shows a compositional bias: basic and acidic residues; that stretch reads AEEPLPKEEKKKREGI. Disordered regions lie at residues 748–791 and 923–954; these read AEEP…SSPP and PHSH…RSRS.

This sequence belongs to the protein kinase superfamily. STE Ser/Thr protein kinase family. MAP kinase kinase kinase subfamily. As to quaternary structure, homodimer. Interacts with TLR4. The cofactor is Mg(2+). Autophosphorylation on serine and threonine residues within the activation loop plays a role in enzyme activation.

It carries out the reaction L-seryl-[protein] + ATP = O-phospho-L-seryl-[protein] + ADP + H(+). It catalyses the reaction L-threonyl-[protein] + ATP = O-phospho-L-threonyl-[protein] + ADP + H(+). Its activity is regulated as follows. Homodimerization via the leucine zipper domains is required for autophosphorylation and subsequent activation. In terms of biological role, negative regulator of TLR4 signaling. Does not activate JNK1/MAPK8 pathway, p38/MAPK14, nor ERK2/MAPK1 pathways. The sequence is that of Mitogen-activated protein kinase kinase kinase 21 from Homo sapiens (Human).